The following is a 107-amino-acid chain: Vasopressin-neurophysin 2 (107 aa).

A disulfide bridge links cysteine 1 with cysteine 6. Glycine amide is present on glycine 9. 7 cysteine pairs are disulfide-bonded: cysteine 22/cysteine 66, cysteine 25/cysteine 39, cysteine 33/cysteine 56, cysteine 40/cysteine 46, cysteine 73/cysteine 85, cysteine 79/cysteine 97, and cysteine 86/cysteine 91.

This sequence belongs to the vasopressin/oxytocin family. As to quaternary structure, interacts with vasopressin receptors V1bR/AVPR1B (Ki=85 pM), V1aR/AVPR1A (Ki=0.6 nM) and V2R/AVPR2 (Ki=4.9 nM). Interacts with oxytocin receptor (OXTR) (Ki=110 nM).

The protein localises to the secreted. Functionally, neurophysin 2 specifically binds vasopressin. In terms of biological role, vasopressin has a direct antidiuretic action on the kidney, it also causes vasoconstriction of the peripheral vessels. Acts by binding to vasopressin receptors (V1bR/AVPR1B, V1aR/AVPR1A, and V2R/AVPR2). The chain is Vasopressin-neurophysin 2 (AVP) from Balaenoptera physalus (Fin whale).